The primary structure comprises 329 residues: Beta-1,3-galactosyltransferase 6 (329 aa).

Residues 1–11 are Cytoplasmic-facing; it reads MKLLRRAWRRR. A helical; Signal-anchor for type II membrane protein membrane pass occupies residues 12 to 34; that stretch reads AALGLGTLALCGAALLYLARCAA. Residues 35–329 are Lumenal-facing; it reads EPGDPRAMSG…QCCQRREGIP (295 aa). The N-linked (GlcNAc...) asparagine glycan is linked to N131.

Belongs to the glycosyltransferase 31 family. Mn(2+) is required as a cofactor. Ubiquitous.

The protein resides in the golgi apparatus. It is found in the golgi stack membrane. It catalyses the reaction 3-O-(beta-D-galactosyl-(1-&gt;4)-beta-D-xylosyl)-L-seryl-[protein] + UDP-alpha-D-galactose = 3-O-(beta-D-galactosyl-(1-&gt;3)-beta-D-galactosyl-(1-&gt;4)-beta-D-xylosyl)-L-seryl-[protein] + UDP + H(+). The protein operates within glycan metabolism; chondroitin sulfate biosynthesis. Its pathway is glycan metabolism; heparan sulfate biosynthesis. In terms of biological role, beta-1,3-galactosyltransferase that transfers galactose from UDP-galactose to substrates with a terminal beta-linked galactose residue. Has a preference for galactose-beta-1,4-xylose that is found in the linker region of glycosaminoglycans, such as heparan sulfate and chondroitin sulfate. Has no activity towards substrates with terminal glucosamine or galactosamine residues. This is Beta-1,3-galactosyltransferase 6 (B3GALT6) from Homo sapiens (Human).